The primary structure comprises 273 residues: Dermonecrotic toxin LdSicTox-alphaIB1bii (273 aa).

His5 is a catalytic residue. Positions 25 and 27 each coordinate Mg(2+). The active-site Nucleophile is the His41. 2 disulfides stabilise this stretch: Cys45-Cys51 and Cys47-Cys190. Asp85 is a Mg(2+) binding site. N-linked (GlcNAc...) asparagine glycosylation is present at Asn250.

It belongs to the arthropod phospholipase D family. Class II subfamily. It depends on Mg(2+) as a cofactor. Expressed by the venom gland.

The protein resides in the secreted. It catalyses the reaction an N-(acyl)-sphingosylphosphocholine = an N-(acyl)-sphingosyl-1,3-cyclic phosphate + choline. It carries out the reaction an N-(acyl)-sphingosylphosphoethanolamine = an N-(acyl)-sphingosyl-1,3-cyclic phosphate + ethanolamine. The catalysed reaction is a 1-acyl-sn-glycero-3-phosphocholine = a 1-acyl-sn-glycero-2,3-cyclic phosphate + choline. The enzyme catalyses a 1-acyl-sn-glycero-3-phosphoethanolamine = a 1-acyl-sn-glycero-2,3-cyclic phosphate + ethanolamine. Dermonecrotic toxins cleave the phosphodiester linkage between the phosphate and headgroup of certain phospholipids (sphingolipid and lysolipid substrates), forming an alcohol (often choline) and a cyclic phosphate. This toxin acts on sphingomyelin (SM). It may also act on ceramide phosphoethanolamine (CPE), lysophosphatidylcholine (LPC) and lysophosphatidylethanolamine (LPE), but not on lysophosphatidylserine (LPS), and lysophosphatidylglycerol (LPG). It acts by transphosphatidylation, releasing exclusively cyclic phosphate products as second products. Induces dermonecrosis, hemolysis, increased vascular permeability, edema, inflammatory response, and platelet aggregation. In Loxosceles deserta (Desert recluse spider), this protein is Dermonecrotic toxin LdSicTox-alphaIB1bii.